Reading from the N-terminus, the 375-residue chain is Methylthioribose-1-phosphate isomerase (375 aa).

Substrate is bound by residues Arg-53 to Ala-55, Arg-90, and Gln-202. The active-site Proton donor is Asp-243. Residue Asn-253–Lys-254 participates in substrate binding.

This sequence belongs to the eIF-2B alpha/beta/delta subunits family. MtnA subfamily.

The catalysed reaction is 5-(methylsulfanyl)-alpha-D-ribose 1-phosphate = 5-(methylsulfanyl)-D-ribulose 1-phosphate. It participates in amino-acid biosynthesis; L-methionine biosynthesis via salvage pathway; L-methionine from S-methyl-5-thio-alpha-D-ribose 1-phosphate: step 1/6. In terms of biological role, catalyzes the interconversion of methylthioribose-1-phosphate (MTR-1-P) into methylthioribulose-1-phosphate (MTRu-1-P). The sequence is that of Methylthioribose-1-phosphate isomerase from Rhodospirillum centenum (strain ATCC 51521 / SW).